The chain runs to 206 residues: Elongation factor Ts (206 aa).

The interval 81–84 (TDFV) is involved in Mg(2+) ion dislocation from EF-Tu.

This sequence belongs to the EF-Ts family.

It is found in the cytoplasm. In terms of biological role, associates with the EF-Tu.GDP complex and induces the exchange of GDP to GTP. It remains bound to the aminoacyl-tRNA.EF-Tu.GTP complex up to the GTP hydrolysis stage on the ribosome. This is Elongation factor Ts from Maridesulfovibrio salexigens (strain ATCC 14822 / DSM 2638 / NCIMB 8403 / VKM B-1763) (Desulfovibrio salexigens).